Reading from the N-terminus, the 90-residue chain is Nodulation protein NolS (90 aa).

Involved in nodulation of a particular host, M.lupulina. This Sinorhizobium meliloti (strain Sm2011 / Rm2011 / 2011) protein is Nodulation protein NolS (nolS).